Here is a 303-residue protein sequence, read N- to C-terminus: Small ribosomal subunit protein uS2 (303 aa).

A disordered region spans residues 267–303 (AESLSMAEEPAPPSQRKGPASETAEPVAEPAVTESGS).

This sequence belongs to the universal ribosomal protein uS2 family.

This chain is Small ribosomal subunit protein uS2, found in Solibacter usitatus (strain Ellin6076).